Here is a 116-residue protein sequence, read N- to C-terminus: MSEPQNGRGALFTGGLAAILASACCLGPLVLIALGFSGAWIGNLTVLEPYRPIFIGAALVALFFAWRRIYRPAQACKPGDVCAIPQVRATYKLIFWVVAALVLVALGFPYVMPFFY.

Helical transmembrane passes span 16-36 (LAAI…ALGF) and 46-66 (VLEP…FFAW). Residues cysteine 24 and cysteine 25 each coordinate Hg(2+). 2 residues coordinate Hg(2+): cysteine 76 and cysteine 82. The helical transmembrane segment at 94–114 (IFWVVAALVLVALGFPYVMPF) threads the bilayer.

It belongs to the MerT family.

The protein resides in the cell inner membrane. Its function is as follows. Involved in mercury resistance. Probably transfers a mercuric ion from the periplasmic Hg(2+)-binding protein MerP to the cytoplasmic mercuric reductase MerA. The protein is Mercuric transport protein MerT of Serratia marcescens.